The sequence spans 531 residues: Peptide chain release factor 3 (531 aa).

The 269-residue stretch at 10–278 (ARRRTFAIIS…DFVEHAPGPL (269 aa)) folds into the tr-type G domain. GTP-binding positions include 19-26 (SHPDAGKT), 87-91 (DTPGH), and 141-144 (NKLD).

The protein belongs to the TRAFAC class translation factor GTPase superfamily. Classic translation factor GTPase family. PrfC subfamily.

The protein resides in the cytoplasm. Its function is as follows. Increases the formation of ribosomal termination complexes and stimulates activities of RF-1 and RF-2. It binds guanine nucleotides and has strong preference for UGA stop codons. It may interact directly with the ribosome. The stimulation of RF-1 and RF-2 is significantly reduced by GTP and GDP, but not by GMP. In Thioalkalivibrio sulfidiphilus (strain HL-EbGR7), this protein is Peptide chain release factor 3.